We begin with the raw amino-acid sequence, 100 residues long: NAD(P)H-quinone oxidoreductase subunit 4L, chloroplastic (100 aa).

The next 3 helical transmembrane spans lie at Met1–Ile21, Ala29–Asn49, and Ile63–Ile83.

The protein belongs to the complex I subunit 4L family. NDH is composed of at least 16 different subunits, 5 of which are encoded in the nucleus.

The protein localises to the plastid. It localises to the chloroplast thylakoid membrane. The enzyme catalyses a plastoquinone + NADH + (n+1) H(+)(in) = a plastoquinol + NAD(+) + n H(+)(out). It carries out the reaction a plastoquinone + NADPH + (n+1) H(+)(in) = a plastoquinol + NADP(+) + n H(+)(out). NDH shuttles electrons from NAD(P)H:plastoquinone, via FMN and iron-sulfur (Fe-S) centers, to quinones in the photosynthetic chain and possibly in a chloroplast respiratory chain. The immediate electron acceptor for the enzyme in this species is believed to be plastoquinone. Couples the redox reaction to proton translocation, and thus conserves the redox energy in a proton gradient. This chain is NAD(P)H-quinone oxidoreductase subunit 4L, chloroplastic, found in Cycas taitungensis (Prince sago).